The sequence spans 294 residues: Tryptophan 2,3-dioxygenase (294 aa).

Residues 1 to 20 (MSEFKGCPFSGAASEAGTKA) form a disordered region. Residues 63 to 67 (FIVQH), Tyr-125, and Arg-129 each bind substrate. Residue His-252 participates in heme binding. A substrate-binding site is contributed by Thr-266.

The protein belongs to the tryptophan 2,3-dioxygenase family. In terms of assembly, homotetramer. The cofactor is heme.

The enzyme catalyses L-tryptophan + O2 = N-formyl-L-kynurenine. It participates in amino-acid degradation; L-tryptophan degradation via kynurenine pathway; L-kynurenine from L-tryptophan: step 1/2. Functionally, heme-dependent dioxygenase that catalyzes the oxidative cleavage of the L-tryptophan (L-Trp) pyrrole ring and converts L-tryptophan to N-formyl-L-kynurenine. Catalyzes the oxidative cleavage of the indole moiety. This chain is Tryptophan 2,3-dioxygenase, found in Cupriavidus necator (strain ATCC 17699 / DSM 428 / KCTC 22496 / NCIMB 10442 / H16 / Stanier 337) (Ralstonia eutropha).